The sequence spans 184 residues: FMRFamide-like neuropeptides 3 (184 aa).

The signal sequence occupies residues 1 to 23; that stretch reads MISPNHLILLFCVNCAFLVASDA. A propeptide spanning residues 24–25 is cleaved from the precursor; that stretch reads TP. The residue at position 35 (Phe-35) is a Phenylalanine amide. Residues 39 to 73 constitute a propeptide that is removed on maturation; it reads AIADEMTFEEDGYYPSNVMWKRSTVDSSEPVIRDQ. Phenylalanine amide is present on residues Phe-82, Phe-95, Phe-111, and Phe-126. Residues 90–110 form a disordered region; sequence FGTMRFGKRNPENDTPFGTMR. A propeptide spanning residues 130-142 is cleaved from the precursor; it reads EDGNAPFGTMKFG. The tract at residues 150–184 is disordered; the sequence is LGTMRFGKRSADDSAPFGTMRFGKRNPLGTMRFGK. Residues Phe-155, Phe-171, and Phe-182 each carry the phenylalanine amide modification.

This sequence belongs to the FARP (FMRFamide related peptide) family. As to expression, each flp gene is expressed in a distinct set of neurons. Flp-3 is expressed in the IL1 and PQR neurons.

The protein localises to the secreted. Its function is as follows. FMRFamides and FMRFamide-like peptides are neuropeptides. SAEPFGTMRF-amide inhibits the activity of dissected pharyngeal myogenic muscle system. In Caenorhabditis elegans, this protein is FMRFamide-like neuropeptides 3.